A 155-amino-acid polypeptide reads, in one-letter code: Protein SprT-like (155 aa).

The SprT-like domain occupies 7 to 144; sequence QRHMEEVSLQ…CGSCGGKLKQ (138 aa). H67 is a binding site for Zn(2+). Residue E68 is part of the active site. Residue H71 coordinates Zn(2+).

It belongs to the SprT family. It depends on Zn(2+) as a cofactor.

It is found in the cytoplasm. The protein is Protein SprT-like of Listeria welshimeri serovar 6b (strain ATCC 35897 / DSM 20650 / CCUG 15529 / CIP 8149 / NCTC 11857 / SLCC 5334 / V8).